The sequence spans 573 residues: MSRVSTAPSGKPTAAHALLSRLRDHGVGKVFGVVGREAASILFDEVEGIDFVLTRHEFTAGVAADVLARITGRPQACWATLGPGMTNLSTGIATSVLDRSPVIALAAQSESHDIFPNDTHQCLDSVAIVAPMSKYAVELQRPHEITDLVDSAVNAAMTEPVGPSFISLPVDLLGSSEGIDTTVPNPPANTPAKPVGVVADGWQKAADQAAALLAEAKHPVLVVGAAAIRSGAVPAIRALAERLNIPVITTYIAKGVLPVGHELNYGAVTGYMDGILNFPALQTMFAPVDLVLTVGYDYAEDLRPSMWQKGIEKKTVRISPTVNPIPRVYRPDVDVVTDVLAFVEHFETATASFGAKQRHDIEPLRARIAEFLADPETYEDGMRVHQVIDSMNTVMEEAAEPGEGTIVSDIGFFRHYGVLFARADQPFGFLTSAGCSSFGYGIPAAIGAQMARPDQPTFLIAGDGGFHSNSSDLETIARLNLPIVTVVVNNDTNGLIELYQNIGHHRSHDPAVKFGGVDFVALAEANGVDATRATNREELLAALRKGAELGRPFLIEVPVNYDFQPGGFGALSI.

Tyr271 and Asp301 together coordinate substrate. 410–413 (IGFF) contributes to the thiamine diphosphate binding site. 414–415 (RH) lines the substrate pocket. 436–438 (SSF) is a binding site for thiamine diphosphate. Residue Asp463 coordinates Mg(2+). Thiamine diphosphate contacts are provided by residues 464–465 (GG), 490–495 (NDTNGL), and Tyr561. Mg(2+)-binding residues include Asn490 and Thr492. Leu571 serves as a coordination point for substrate.

In terms of assembly, homotetramer; dimer of dimers. The cofactor is Mg(2+). Thiamine diphosphate is required as a cofactor.

It catalyses the reaction D-glyceraldehyde 3-phosphate + L-arginine = N(2)-(2-carboxyethyl)-L-arginine + phosphate + H(+). Involved in the biosynthesis of the beta-lactamase inhibitor, clavulanic acid. Catalyzes the thiamine diphosphate (ThDP) dependent condensation of D-glyceraldehyde-3-phosphate (D-G3P) with L-arginine to yield the beta-amino acid, N2-(2-carboxyethyl)arginine (CEA) via a beta-elimination resulting in the formation of an enol which undergoes a second elimination to generate the alpha,beta-unsaturated acryloyl-ThDP. The sequence is that of N(2)-(2-carboxyethyl)arginine synthase from Streptomyces clavuligerus.